A 349-amino-acid chain; its full sequence is MPSPIPFNSFLPLELSPSADLRPCSSPVVIPGKDGKAFLGGTPSPRTRRLPPRLAWCSIDWDRLCLLQPLGSGGFGAVYKATYHGVTVAVKQVKKSSKNRLASRQSFWAELNVARLQHDNVVRVVAASTCAPASQNSLGTIIMEYVGNVTLHHVIYGTRDAWRQGEEEEGGCGRKALSMAEAVCYSCDIVTGLAFLHSQGIVHLDLKPANILITEHGACKIGDFGCSQRLEEGLSQSHHVCQQGGTYTHRAPELLKGERVTAKADIYSFAITLWQIVMREQPYLGERQYVLYAVVAYNLRPPLAAAIFHESAVGQRLRSIISCCWKADVEERLSAAQLLPSLRALKENL.

In terms of domain architecture, Protein kinase spans 64–345 (LCLLQPLGSG…AQLLPSLRAL (282 aa)). ATP contacts are provided by residues 70–78 (LGSGGFGAV) and Lys91. Asp205 functions as the Proton acceptor in the catalytic mechanism.

This sequence belongs to the protein kinase superfamily. Ser/Thr protein kinase family.

Its subcellular location is the cytoplasm. It carries out the reaction L-seryl-[protein] + ATP = O-phospho-L-seryl-[protein] + ADP + H(+). It catalyses the reaction L-threonyl-[protein] + ATP = O-phospho-L-threonyl-[protein] + ADP + H(+). In terms of biological role, serine/threonine kinase involved in the regulation of MAPK signaling. The polypeptide is Serine/threonine-protein kinase mos (MOS) (Gallus gallus (Chicken)).